The sequence spans 382 residues: Pregnancy-associated glycoprotein 1 (382 aa).

Residues 1 to 15 form the signal peptide; sequence MKWLVLLGLVAFSEC. Residues 16–53 constitute a propeptide, activation peptide; it reads IVKIPLRRVKTMRNTLSGKKMLNSFLKEHAYRLSQISF. N-linked (GlcNAc...) asparagine glycosylation is found at asparagine 57 and asparagine 74. In terms of domain architecture, Peptidase A1 spans 71–379; that stretch reads YVGNITIGTP…DRGNDRIGLA (309 aa). A disulfide bridge links cysteine 102 with cysteine 110. Asparagine 128 carries N-linked (GlcNAc...) asparagine glycosylation. 2 disulfide bridges follow: cysteine 263–cysteine 267 and cysteine 305–cysteine 339.

Belongs to the peptidase A1 family. Trophoblast and placental tissue. Produced specifically in the invasive binucleate cells of the placenta.

The protein localises to the secreted. The protein resides in the extracellular space. In terms of biological role, has no proteolytic activity. This Ovis aries (Sheep) protein is Pregnancy-associated glycoprotein 1.